The chain runs to 465 residues: Glutamate--tRNA ligase (465 aa).

The short motif at 11-21 is the 'HIGH' region element; sequence PSPTGFIHLGN. A disordered region spans residues 118–139; it reads GEKPRYDGTWRPAPGKILPPPP. The short motif at 243–247 is the 'KMSKS' region element; that stretch reads KMSKR. K246 is an ATP binding site.

It belongs to the class-I aminoacyl-tRNA synthetase family. Glutamate--tRNA ligase type 1 subfamily. In terms of assembly, monomer.

It localises to the cytoplasm. It carries out the reaction tRNA(Glu) + L-glutamate + ATP = L-glutamyl-tRNA(Glu) + AMP + diphosphate. Functionally, catalyzes the attachment of glutamate to tRNA(Glu) in a two-step reaction: glutamate is first activated by ATP to form Glu-AMP and then transferred to the acceptor end of tRNA(Glu). In Ralstonia pickettii (strain 12J), this protein is Glutamate--tRNA ligase.